Consider the following 137-residue polypeptide: Structural protein A137R (137 aa).

The protein belongs to the asfivirus A137R family. In terms of assembly, interacts with host TBK1.

It localises to the virion. The protein resides in the host cytoplasm. Functionally, plays a role in the inhibition of the host innate immune response. Mechanistically, promotes the autophagy-mediated lysosomal degradation of host TBK1 and affects IRF3 nuclear translocation to block type I IFN production. In Ornithodoros (relapsing fever ticks), this protein is Structural protein A137R.